Consider the following 256-residue polypeptide: DNA repair protein RecO (256 aa).

It belongs to the RecO family.

Involved in DNA repair and RecF pathway recombination. This chain is DNA repair protein RecO, found in Delftia acidovorans (strain DSM 14801 / SPH-1).